A 598-amino-acid chain; its full sequence is Biotin-dependent acyl-coenzyme A carboxylase alpha3 subunit (598 aa).

A Biotin carboxylation domain is found at 8–452; the sequence is RIAKVLVANR…SFSVHTRWIE (445 aa). Residues 127–324 form the ATP-grasp domain; it reads RHIAARAQAP…LVLQQFKIAN (198 aa). 155 to 216 lines the ATP pocket; sequence AKEHGVPIAI…ERYLDKPRHV (62 aa). Mg(2+) is bound by residues Glu282, Glu295, and Asn297. 3 residues coordinate Mn(2+): Glu282, Glu295, and Asn297. The interval 506-531 is disordered; it reads PAGVIRKKPKPRKRGGHTGAATSGDA. The segment covering 510-521 has biased composition (basic residues); sequence IRKKPKPRKRGG. The 77-residue stretch at 522-598 folds into the Biotinyl-binding domain; sequence HTGAATSGDA…TQGTVLAEIK (77 aa). N6-biotinyllysine is present on Lys564.

The biotin-dependent acyl-CoA carboxylase complex is composed of AccA3, which contains the biotin carboxylase (BC) and biotin carboxyl carrier protein (BCCP) domains, and an AccD protein, which contains the carboxyl transferase (CT) domain. Mg(2+) serves as cofactor. It depends on Mn(2+) as a cofactor. Biotin is required as a cofactor.

The enzyme catalyses N(6)-biotinyl-L-lysyl-[protein] + hydrogencarbonate + ATP = N(6)-carboxybiotinyl-L-lysyl-[protein] + ADP + phosphate + H(+). The protein operates within lipid metabolism; fatty acid biosynthesis. It participates in lipid metabolism; mycolic acid biosynthesis. Its function is as follows. Component of a biotin-dependent acyl-CoA carboxylase complex. This subunit catalyzes the ATP-dependent carboxylation of the biotin carried by the biotin carboxyl carrier (BCC) domain, resulting in the formation of carboxyl biotin. In Mycobacterium leprae (strain TN), this protein is Biotin-dependent acyl-coenzyme A carboxylase alpha3 subunit (bccA).